A 389-amino-acid chain; its full sequence is tRNA (cytosine(72)-C(5))-methyltransferase (389 aa).

The region spanning 92 to 167 (LPVVVANKYA…LAVEVTLPKF (76 aa)) is the PUA domain. Residues 209-215 (AAAPGGK), Asp233, Arg238, Asp260, Asp277, and Tyr304 each bind S-adenosyl-L-methionine. Cys327 (nucleophile) is an active-site residue.

Belongs to the class I-like SAM-binding methyltransferase superfamily. RsmB/NOP family.

The catalysed reaction is cytidine(72) in tRNA + S-adenosyl-L-methionine = 5-methylcytidine(72) in tRNA + S-adenosyl-L-homocysteine + H(+). It catalyses the reaction cytidine(72) in tRNA(Thr) + S-adenosyl-L-methionine = 5-methylcytidine(72) in tRNA(Thr) + S-adenosyl-L-homocysteine + H(+). The enzyme catalyses cytidine(72) in tRNA(Cys) + S-adenosyl-L-methionine = 5-methylcytidine(72) in tRNA(Cys) + S-adenosyl-L-homocysteine + H(+). Its function is as follows. S-adenosyl-L-methionine-dependent methyltransferase that specifically methylates the C5 position of cytosine 72 in several tRNAs. This modification appears to slightly promote the thermal stability of P.horikoshii tRNAs, but does not affect their amino acid accepting activity. Four elements in the acceptor stems of tRNAs are essential for substrate recognition by this enzyme: the target site C72, the 3'-CCA terminus, U73 or G73, and the second base pair C2:G71. The sequence is that of tRNA (cytosine(72)-C(5))-methyltransferase from Pyrococcus horikoshii (strain ATCC 700860 / DSM 12428 / JCM 9974 / NBRC 100139 / OT-3).